Consider the following 239-residue polypeptide: Purine nucleoside phosphorylase DeoD-type (239 aa).

Residue H5 participates in a purine D-ribonucleoside binding. Residues G21, R25, R44, and 88–91 (RVGS) contribute to the phosphate site. Residues 180-182 (EME) and 204-205 (SD) each bind a purine D-ribonucleoside. The active-site Proton donor is the D205.

The protein belongs to the PNP/UDP phosphorylase family. Homohexamer; trimer of homodimers.

The catalysed reaction is a purine D-ribonucleoside + phosphate = a purine nucleobase + alpha-D-ribose 1-phosphate. It carries out the reaction a purine 2'-deoxy-D-ribonucleoside + phosphate = a purine nucleobase + 2-deoxy-alpha-D-ribose 1-phosphate. Catalyzes the reversible phosphorolytic breakdown of the N-glycosidic bond in the beta-(deoxy)ribonucleoside molecules, with the formation of the corresponding free purine bases and pentose-1-phosphate. This chain is Purine nucleoside phosphorylase DeoD-type, found in Pectobacterium atrosepticum (strain SCRI 1043 / ATCC BAA-672) (Erwinia carotovora subsp. atroseptica).